Consider the following 131-residue polypeptide: Translation initiation factor 5A (131 aa).

A Hypusine modification is found at lysine 36.

This sequence belongs to the eIF-5A family.

The protein localises to the cytoplasm. In terms of biological role, functions by promoting the formation of the first peptide bond. This chain is Translation initiation factor 5A, found in Sulfurisphaera tokodaii (strain DSM 16993 / JCM 10545 / NBRC 100140 / 7) (Sulfolobus tokodaii).